The primary structure comprises 555 residues: Carboxypeptidase Y homolog A (555 aa).

Residues 1 to 17 (MRGLATTLLIGAAAAAT) form the signal peptide. The propeptide occupies 18-136 (YPAQQVLKAP…RLETFDLRVK (119 aa)). Disulfide bonds link cysteine 191/cysteine 430, cysteine 325/cysteine 339, cysteine 349/cysteine 372, cysteine 356/cysteine 365, and cysteine 394/cysteine 400. A glycan (N-linked (GlcNAc...) asparagine) is linked at asparagine 222. The active site involves serine 278. The active site involves aspartate 469. Asparagine 520 carries N-linked (GlcNAc...) asparagine glycosylation. Histidine 531 is an active-site residue.

It belongs to the peptidase S10 family.

It localises to the vacuole. It catalyses the reaction Release of a C-terminal amino acid with broad specificity.. Functionally, vacuolar carboxypeptidase involved in degradation of small peptides. Digests preferentially peptides containing an aliphatic or hydrophobic residue in P1' position, as well as methionine, leucine or phenylalanine in P1 position of ester substrate. The sequence is that of Carboxypeptidase Y homolog A (cpyA) from Talaromyces marneffei (strain ATCC 18224 / CBS 334.59 / QM 7333) (Penicillium marneffei).